Reading from the N-terminus, the 237-residue chain is Orotate phosphoribosyltransferase (237 aa).

Lys29 is a binding site for 5-phospho-alpha-D-ribose 1-diphosphate. Residue 37–38 participates in orotate binding; sequence FF. Residues 79–80, Arg105, Lys106, Lys109, His111, and 130–138 contribute to the 5-phospho-alpha-D-ribose 1-diphosphate site; these read YK and DDVMSAGTA. Ser134 and Arg162 together coordinate orotate.

Belongs to the purine/pyrimidine phosphoribosyltransferase family. PyrE subfamily. In terms of assembly, homodimer. Mg(2+) serves as cofactor.

The enzyme catalyses orotidine 5'-phosphate + diphosphate = orotate + 5-phospho-alpha-D-ribose 1-diphosphate. The protein operates within pyrimidine metabolism; UMP biosynthesis via de novo pathway; UMP from orotate: step 1/2. In terms of biological role, catalyzes the transfer of a ribosyl phosphate group from 5-phosphoribose 1-diphosphate to orotate, leading to the formation of orotidine monophosphate (OMP). This chain is Orotate phosphoribosyltransferase, found in Polaromonas naphthalenivorans (strain CJ2).